A 239-amino-acid polypeptide reads, in one-letter code: ATP-dependent dethiobiotin synthetase BioD (239 aa).

ATP is bound at residue 15-20; sequence EIGKTF. Threonine 19 serves as a coordination point for Mg(2+). Lysine 40 is a catalytic residue. Residues aspartate 57, 118-121, 178-179, and 211-213 each bind ATP; these read EGVG, NH, and AHL. Mg(2+) is bound by residues aspartate 57 and glutamate 118.

Belongs to the dethiobiotin synthetase family. In terms of assembly, homodimer. The cofactor is Mg(2+).

It is found in the cytoplasm. The enzyme catalyses (7R,8S)-7,8-diammoniononanoate + CO2 + ATP = (4R,5S)-dethiobiotin + ADP + phosphate + 3 H(+). The protein operates within cofactor biosynthesis; biotin biosynthesis; biotin from 7,8-diaminononanoate: step 1/2. In terms of biological role, catalyzes a mechanistically unusual reaction, the ATP-dependent insertion of CO2 between the N7 and N8 nitrogen atoms of 7,8-diaminopelargonic acid (DAPA, also called 7,8-diammoniononanoate) to form a ureido ring. In Burkholderia vietnamiensis (strain G4 / LMG 22486) (Burkholderia cepacia (strain R1808)), this protein is ATP-dependent dethiobiotin synthetase BioD.